A 291-amino-acid polypeptide reads, in one-letter code: Serine hydrolase BPHL (291 aa).

Positions 1-37 are cleaved as a signal peptide; it reads MATATVRPAAQRLRLLLSPLKSRICVPQAEPVATFGT. The AB hydrolase-1 domain maps to 62–173; sequence AILLLPGMLG…ANAYVTEEDS (112 aa). Lys-74 is subject to N6-acetyllysine; alternate. The residue at position 74 (Lys-74) is an N6-succinyllysine; alternate. 2 positions are modified to N6-acetyllysine: Lys-86 and Lys-119. Lys-126 is subject to N6-acetyllysine; alternate. Residue Lys-126 is modified to N6-succinyllysine; alternate. Residue Ser-139 is the Nucleophile of the active site. The residue at position 184 (Lys-184) is an N6-succinyllysine. An N6-acetyllysine; alternate modification is found at Lys-191. An N6-succinyllysine; alternate modification is found at Lys-191. Position 217 is an N6-acetyllysine (Lys-217). Glu-221 lines the Mg(2+) pocket. The residue at position 243 (Lys-243) is an N6-acetyllysine. Asp-244 acts as the Charge relay system in catalysis. N6-acetyllysine; alternate occurs at positions 260 and 271. Lys-260 and Lys-271 each carry N6-succinyllysine; alternate. Catalysis depends on His-272, which acts as the Charge relay system.

Belongs to the AB hydrolase superfamily. Lipase family. As to quaternary structure, monomer. May also form homodimers.

The protein resides in the mitochondrion. It carries out the reaction L-homocysteine thiolactone + H2O = L-homocysteine + H(+). The enzyme catalyses valacyclovir + H2O = acyclovir + L-valine + H(+). Functionally, specific alpha-amino acid ester serine hydrolase that prefers small, hydrophobic, and aromatic side chains and does not have a stringent requirement for the leaving group other than preferring a primary alcohol. Has homocysteine-thiolactonase activity (in vitro) and may play a significant role in the detoxification of homocysteine thiolactone in vivo. Catalyzes the hydrolytic activation of amino acid ester prodrugs of nucleoside analogs such as valacyclovir and valganciclovir, converting them into their active forms (acyclovir and ganciclovir). This chain is Serine hydrolase BPHL (Bphl), found in Mus musculus (Mouse).